Reading from the N-terminus, the 116-residue chain is Large ribosomal subunit protein bL19 (116 aa).

It belongs to the bacterial ribosomal protein bL19 family.

Its function is as follows. This protein is located at the 30S-50S ribosomal subunit interface and may play a role in the structure and function of the aminoacyl-tRNA binding site. The sequence is that of Large ribosomal subunit protein bL19 from Haemophilus influenzae (strain 86-028NP).